A 529-amino-acid chain; its full sequence is Kunitz-type protease inhibitor 1 (529 aa).

Residues 1 to 35 (MAPARTMARARLAPAGIPAVALWLLCTLGLQGTQA) form the signal peptide. The region spanning 57-140 (GVPGFVLDTN…FAPREGFINY (84 aa)) is the MANSC domain. N-linked (GlcNAc...) asparagine glycosylation is found at N66 and N235. One can recognise a BPTI/Kunitz inhibitor 1 domain in the interval 250–300 (CLASNKVGRCRGSFPRWYYDPTEQICKSFVYGGCLGNKNNYLREEECILAC). 9 disulfides stabilise this stretch: C250-C300, C259-C283, C275-C296, C335-C347, C342-C360, C354-C369, C391-C441, C400-C424, and C416-C437. Residues 334–370 (TCQPTQFRCSNGCCIDSFLECDDTPNCPDASDEAACE) form the LDL-receptor class A domain. In terms of domain architecture, BPTI/Kunitz inhibitor 2 spans 391–441 (CVDLPDTGLCKESIPRWYYNPFSEHCARFTYGGCYGNKNNFEEEQQCLESC). N523 carries an N-linked (GlcNAc...) asparagine glycan.

As to quaternary structure, interacts with HGFAC. Interacts with TMPRSS13; the interaction promotes the phosphorylation and cell membrane localization of TMPRSS13.

It is found in the secreted. The protein resides in the cytoplasm. Its subcellular location is the cell membrane. Inhibitor of HGFAC. Inhibits serine protease activity of ST14/matriptase in vitro. Inhibits serine protease activity of TMPRSS13, via the BPTI/Kunitz inhibitor 1 domain. The chain is Kunitz-type protease inhibitor 1 (SPINT1) from Homo sapiens (Human).